The following is a 317-amino-acid chain: MSSISGLVEDEISSFFESSPPLKNKEEIVANLNQFIELNSSCQGGMRRIVCVTSGGTTVPLEQRCVRYIDNFSSGNRGAASTENFVKAGYAVIFLYRRGTCQPYCRYLPDDPFLECFEFPDAKNIQVHGSHSGAVKMAVMDQQAAVAEGRLLKLPFSTIYEYLQMLRLIATILKDVGPCSMFYLAAAVSDFYVPWLSMTEHKIESGSGPLDIRLAQVPKMLSILRSNWAPKAFCISFKLETDSKILLEKATKALQKYKVHAVVANELLTRKEEVVVVSSSGNVVVRRDSNKPESIVEDNLIRLLVDRHSTYIKESLT.

The protein belongs to the PPC synthetase family. Homodimer.

The enzyme catalyses (R)-4'-phosphopantothenate + L-cysteine + ATP = N-[(R)-4-phosphopantothenoyl]-L-cysteine + AMP + diphosphate + H(+). It participates in cofactor biosynthesis; coenzyme A biosynthesis; CoA from (R)-pantothenate: step 2/5. Functionally, catalyzes the first step in the biosynthesis of coenzyme A from vitamin B5/pantothenate, where cysteine is conjugated to 4'-phosphopantothenate to form 4-phosphopantothenoylcysteine. The catalytic activity is not CTP- but ATP-dependent. The sequence is that of Phosphopantothenate--cysteine ligase 1 (PPCS1) from Arabidopsis thaliana (Mouse-ear cress).